A 332-amino-acid chain; its full sequence is Glycerol-3-phosphate dehydrogenase [NAD(P)+] (332 aa).

The NADPH site is built by S11, F12, K32, and K106. Residues K106, G137, and S139 each coordinate sn-glycerol 3-phosphate. A141 is an NADPH binding site. Sn-glycerol 3-phosphate-binding residues include K192, D245, S255, R256, and N257. K192 (proton acceptor) is an active-site residue. R256 is an NADPH binding site. NADPH-binding residues include V280 and E282.

Belongs to the NAD-dependent glycerol-3-phosphate dehydrogenase family.

The protein resides in the cytoplasm. The catalysed reaction is sn-glycerol 3-phosphate + NAD(+) = dihydroxyacetone phosphate + NADH + H(+). It carries out the reaction sn-glycerol 3-phosphate + NADP(+) = dihydroxyacetone phosphate + NADPH + H(+). The protein operates within membrane lipid metabolism; glycerophospholipid metabolism. Functionally, catalyzes the reduction of the glycolytic intermediate dihydroxyacetone phosphate (DHAP) to sn-glycerol 3-phosphate (G3P), the key precursor for phospholipid synthesis. The protein is Glycerol-3-phosphate dehydrogenase [NAD(P)+] of Staphylococcus aureus (strain USA300).